Here is a 311-residue protein sequence, read N- to C-terminus: Haloalkane dehalogenase (311 aa).

The AB hydrolase-1 domain maps to 30–148; sequence AIVFQHGNPS…WDDFPDEVAQ (119 aa). Catalysis depends on Asp107, which acts as the Nucleophile. The Proton donor role is filled by Glu131. The active-site Proton acceptor is the His272.

Belongs to the haloalkane dehalogenase family. Type 2 subfamily. Monomer.

It carries out the reaction 1-haloalkane + H2O = a halide anion + a primary alcohol + H(+). Its function is as follows. Catalyzes hydrolytic cleavage of carbon-halogen bonds in halogenated aliphatic compounds, leading to the formation of the corresponding primary alcohols, halide ions and protons. This Mycolicibacterium smegmatis (strain ATCC 700084 / mc(2)155) (Mycobacterium smegmatis) protein is Haloalkane dehalogenase.